Here is a 156-residue protein sequence, read N- to C-terminus: Putative HTH-type transcriptional regulator BadM (156 aa).

The region spanning 4–130 is the HTH rrf2-type domain; it reads RLQKSTMCGL…RSVSITSLLK (127 aa). The disordered stretch occupies residues 136–156; that stretch reads RRKTERGPNGASARHSSAGRA. Residues 145–156 show a composition bias toward low complexity; it reads GASARHSSAGRA.

This chain is Putative HTH-type transcriptional regulator BadM (badM), found in Rhodopseudomonas palustris (strain ATCC BAA-98 / CGA009).